The following is a 120-amino-acid chain: Large ribosomal subunit protein bL20 (120 aa).

It belongs to the bacterial ribosomal protein bL20 family.

Functionally, binds directly to 23S ribosomal RNA and is necessary for the in vitro assembly process of the 50S ribosomal subunit. It is not involved in the protein synthesizing functions of that subunit. The polypeptide is Large ribosomal subunit protein bL20 (Xanthobacter autotrophicus (strain ATCC BAA-1158 / Py2)).